The primary structure comprises 469 residues: Solute carrier family 52, riboflavin transporter, member 3 (469 aa).

Over 1-6 (MALLTH) the chain is Cytoplasmic. The chain crosses the membrane as a helical span at residues 7–27 (LLVCTFGMGSWVAINGLWVEL). Residues 28–43 (PLLVTELPEGWYLPSY) lie on the Extracellular side of the membrane. Residues 44–64 (LTMVIQLANIGPLLVTLLHHF) traverse the membrane as a helical segment. At 65–71 (QPSCLSE) the chain is on the cytoplasmic side. The helical transmembrane segment at 72–92 (VPIIFTVLAVGTVACALFAFL) threads the bilayer. The Extracellular portion of the chain corresponds to 93–105 (WNVTSWVLDGRHS). Residue asparagine 94 is glycosylated (N-linked (GlcNAc...) asparagine). Residues 106 to 126 (IAFMVLTFFLALVDCTSSVTF) form a helical membrane-spanning segment. At 127–137 (LPFMSRLPACY) the chain is on the cytoplasmic side. Residues 138–158 (LTTFFVGEGLSSLLPALVALA) form a helical membrane-spanning segment. Residues 159–220 (QGSGLTTCVN…SRYLPANFSP (62 aa)) lie on the Extracellular side of the membrane. An N-linked (GlcNAc...) asparagine glycan is attached at asparagine 168. Residues 221–241 (LVFFLLLSFMMACCLAAFFLL) form a helical membrane-spanning segment. The Cytoplasmic portion of the chain corresponds to 242–297 (QRQPRPRESSIEDLLTSQVTLHSIRPREGDDLGPPDPGPSSKAQGLPEEKTASDHP). At serine 251 the chain carries Phosphoserine. Positions 266–290 (RPREGDDLGPPDPGPSSKAQGLPEE) are disordered. Residues 298–318 (AHLAFIYVLVAFVNALTNGVL) form a helical membrane-spanning segment. At 319–335 (PSVQTYSCLSYGPVAYH) the chain is on the extracellular side. A helical membrane pass occupies residues 336 to 356 (LSATLSSMANPLACFLSMFLP). Residues 357-361 (HRSLP) lie on the Cytoplasmic side of the membrane. The chain crosses the membrane as a helical span at residues 362–382 (FLGVLTVLGTGFGAYNMAMAV). Residues 383 to 396 (MSPCPLMQGHWAGE) lie on the Extracellular side of the membrane. The helical transmembrane segment at 397 to 417 (ILIVASWVLFIGCLSYVKVML) threads the bilayer. Residues 418–427 (GVILRDRSRS) are Cytoplasmic-facing. The helical transmembrane segment at 428–448 (ALVWCGAAVQLGSLLGALLMF) threads the bilayer. Over 449–469 (PLVNVLRLFSSADFCSLQCSA) the chain is Extracellular.

The protein belongs to the riboflavin transporter family.

Its subcellular location is the cell membrane. It catalyses the reaction riboflavin(in) = riboflavin(out). Functionally, plasma membrane transporter mediating the uptake by cells of the water soluble vitamin B2/riboflavin that plays a key role in biochemical oxidation-reduction reactions of the carbohydrate, lipid, and amino acid metabolism. This chain is Solute carrier family 52, riboflavin transporter, member 3 (SLC52A3), found in Ailuropoda melanoleuca (Giant panda).